We begin with the raw amino-acid sequence, 78 residues long: Acyl carrier protein (78 aa).

One can recognise a Carrier domain in the interval 2–77 (SSIEERVKKI…LAINYINENL (76 aa)). An O-(pantetheine 4'-phosphoryl)serine modification is found at Ser-37.

It belongs to the acyl carrier protein (ACP) family. Post-translationally, 4'-phosphopantetheine is transferred from CoA to a specific serine of apo-ACP by AcpS. This modification is essential for activity because fatty acids are bound in thioester linkage to the sulfhydryl of the prosthetic group.

It localises to the cytoplasm. The protein operates within lipid metabolism; fatty acid biosynthesis. Carrier of the growing fatty acid chain in fatty acid biosynthesis. The chain is Acyl carrier protein from Saccharophagus degradans (strain 2-40 / ATCC 43961 / DSM 17024).